A 196-amino-acid chain; its full sequence is Histone H1.0 (196 aa).

Disordered stretches follow at residues 1-29 (MTEN…PKYS) and 78-196 (SGTL…GRKK). Residues 24 to 97 (DHPKYSDMIL…GASGSFRLAK (74 aa)) enclose the H15 domain. Residues 104–196 (PAKKPKKEIK…ASPKKSGRKK (93 aa)) show a composition bias toward basic residues.

Belongs to the histone H1/H5 family.

It localises to the nucleus. The protein resides in the chromosome. Histones H1 are necessary for the condensation of nucleosome chains into higher-order structures. The histones H1.0 are found in cells that are in terminal stages of differentiation or that have low rates of cell division. This is Histone H1.0 (h1-0) from Xenopus tropicalis (Western clawed frog).